We begin with the raw amino-acid sequence, 201 residues long: Large ribosomal subunit protein uL4 (201 aa).

The interval 44–68 (KAQKTRSEVAGTTKKSKKQKGGGAR) is disordered.

It belongs to the universal ribosomal protein uL4 family. In terms of assembly, part of the 50S ribosomal subunit.

Functionally, one of the primary rRNA binding proteins, this protein initially binds near the 5'-end of the 23S rRNA. It is important during the early stages of 50S assembly. It makes multiple contacts with different domains of the 23S rRNA in the assembled 50S subunit and ribosome. Its function is as follows. Forms part of the polypeptide exit tunnel. This is Large ribosomal subunit protein uL4 from Xanthomonas campestris pv. campestris (strain 8004).